Here is a 385-residue protein sequence, read N- to C-terminus: Putative nickel insertion protein (385 aa).

The protein belongs to the LarC family.

The chain is Putative nickel insertion protein from Geobacter sp. (strain M21).